A 197-amino-acid polypeptide reads, in one-letter code: Adenylyl-sulfate kinase (197 aa).

Residue 31–38 participates in ATP binding; it reads GLSGAGKS. Ser105 serves as the catalytic Phosphoserine intermediate.

The protein belongs to the APS kinase family.

It catalyses the reaction adenosine 5'-phosphosulfate + ATP = 3'-phosphoadenylyl sulfate + ADP + H(+). It functions in the pathway sulfur metabolism; hydrogen sulfide biosynthesis; sulfite from sulfate: step 2/3. Catalyzes the synthesis of activated sulfate. This chain is Adenylyl-sulfate kinase, found in Aeromonas hydrophila subsp. hydrophila (strain ATCC 7966 / DSM 30187 / BCRC 13018 / CCUG 14551 / JCM 1027 / KCTC 2358 / NCIMB 9240 / NCTC 8049).